The primary structure comprises 528 residues: Na(+)/H(+) antiporter NhaB (528 aa).

The next 11 membrane-spanning stretches (helical) occupy residues 10 to 30, 63 to 83, 96 to 116, 131 to 165, 204 to 224, 240 to 260, 305 to 325, 359 to 379, 391 to 411, 449 to 469, and 476 to 496; these read IGNF…SFLI, YPLQ…MTSA, VLLL…LLLF, VSLM…FYAI, LLMH…VGEP, FVVR…LTCL, VLVG…VGLV, LAVF…APVI, LVIF…VFVG, ATPN…APLI, and MVWM…LAIE.

Belongs to the NhaB Na(+)/H(+) (TC 2.A.34) antiporter family.

It localises to the cell inner membrane. It catalyses the reaction 2 Na(+)(in) + 3 H(+)(out) = 2 Na(+)(out) + 3 H(+)(in). Functionally, na(+)/H(+) antiporter that extrudes sodium in exchange for external protons. The chain is Na(+)/H(+) antiporter NhaB from Shewanella sp. (strain W3-18-1).